The sequence spans 301 residues: uncharacterized protein (301 aa).

Transmembrane regions (helical) follow at residues 1–21 (MSWI…LRII), 33–53 (SVLF…YVYY), 72–92 (AMSL…KIPW), 101–121 (FGII…IILI), 124–144 (FAWL…KTFY), 194–214 (VLIE…IFAI), 220–240 (IIYT…FCLA), 253–273 (LALI…IAIP), and 274–294 (EYVA…ASII).

The protein belongs to the TerC family.

It is found in the cell membrane. This is an uncharacterized protein from Rickettsia conorii (strain ATCC VR-613 / Malish 7).